The chain runs to 242 residues: Phosphomannomutase 2 (242 aa).

Asp8 functions as the Nucleophile in the catalytic mechanism. Mg(2+) contacts are provided by Asp8 and Asp10. Asp10 acts as the Proton donor/acceptor in catalysis. Arg17, Arg119, Arg130, and Arg137 together coordinate alpha-D-mannose 1-phosphate. Residue Lys145 is modified to N6-acetyllysine. Alpha-D-mannose 1-phosphate contacts are provided by Ser175 and Asp177. Mg(2+) contacts are provided by Asp205, Phe217, Asp219, and Thr222.

This sequence belongs to the eukaryotic PMM family. Homodimer.

It localises to the cytoplasm. It carries out the reaction alpha-D-mannose 1-phosphate = D-mannose 6-phosphate. It functions in the pathway nucleotide-sugar biosynthesis; GDP-alpha-D-mannose biosynthesis; alpha-D-mannose 1-phosphate from D-fructose 6-phosphate: step 2/2. Functionally, involved in the synthesis of the GDP-mannose and dolichol-phosphate-mannose required for a number of critical mannosyl transfer reactions. The polypeptide is Phosphomannomutase 2 (Pmm2) (Mus musculus (Mouse)).